The following is a 213-amino-acid chain: A-type ATP synthase subunit D (213 aa).

Belongs to the V-ATPase D subunit family. Has multiple subunits with at least A(3), B(3), C, D, E, F, H, I and proteolipid K(x).

The protein localises to the cell membrane. Functionally, component of the A-type ATP synthase that produces ATP from ADP in the presence of a proton gradient across the membrane. The sequence is that of A-type ATP synthase subunit D from Saccharolobus islandicus (strain L.S.2.15 / Lassen #1) (Sulfolobus islandicus).